A 144-amino-acid polypeptide reads, in one-letter code: Gas vesicle protein I1 (144 aa).

The disordered stretch occupies residues 1-144; it reads MSDKQQQKHK…SPTEDEVNDE (144 aa). Composition is skewed to basic residues over residues 7-17 and 26-46; these read QKHKQKARQAR and KARR…TRNR. The span at 75–94 shows a compositional bias: polar residues; sequence MPPQKSNAENAVRNSHSTVP. Residues 122-136 are compositionally biased toward low complexity; it reads SEASAPSDESASGSP.

It belongs to the gas vesicle GvpI family. As to quaternary structure, gvpF to GvpM interact with each other in vitro, and may form multi-subunit complex(es). Interacts with GvpC1 and GvpO.

The protein localises to the gas vesicle. In terms of biological role, proteins GvpF to GvpM might be involved in nucleating gas vesicle formation. A minor component of the gas vesicle. Gas vesicles are hollow, gas filled proteinaceous nanostructures found in several microbial planktonic microorganisms. They allow positioning of halobacteria at the optimal depth for growth in the poorly aerated, shallow brine pools of their habitat. Functionally, expression of a 9.5 kb p-vac DNA fragment containing 2 divergently transcribed regions (gvpD-gvpE-gvpF-gvpG-gvpH-gvpI-gvpJ-gvpK-gvpL-gvpM and gvpA-gvpC-gvpN-gvpO) allows H.volcanii to produce gas vesicles. A similar region restores gas vesicle production in H.halobium without the p-vac locus, but it still has the c-vac locus. The protein is Gas vesicle protein I1 (gvpI11) of Halobacterium salinarum (strain ATCC 700922 / JCM 11081 / NRC-1) (Halobacterium halobium).